The chain runs to 100 residues: Class II hydrophobin FOXG_02746 (100 aa).

Residues 1–17 (MQFYTIVSLFLAGTAYA) form the signal peptide. Cystine bridges form between Cys29/Cys79, Cys40/Cys70, Cys41/Cys53, and Cys80/Cys92.

The protein belongs to the cerato-ulmin hydrophobin family. Homodimer. Homodimers further self-assemble to form highly ordered films at water-air interfaces through intermolecular interactions.

It is found in the secreted. The protein resides in the cell wall. Aerial growth, conidiation, and dispersal of filamentous fungi in the environment rely upon a capability of their secreting small amphipathic proteins called hydrophobins (HPBs) with low sequence identity. Class I can self-assemble into an outermost layer of rodlet bundles on aerial cell surfaces, conferring cellular hydrophobicity that supports fungal growth, development and dispersal; whereas Class II form highly ordered films at water-air interfaces through intermolecular interactions but contribute nothing to the rodlet structure. FOXG_02746 is a class II hydrophobin that is likely required for plant colonization. The protein is Class II hydrophobin FOXG_02746 of Fusarium oxysporum f. sp. lycopersici (strain 4287 / CBS 123668 / FGSC 9935 / NRRL 34936) (Fusarium vascular wilt of tomato).